The sequence spans 311 residues: MANPLYHKHIISINDLSRDELELVLRTAASLKKTPQPELLKHKVIASCFFEASTRTRLSFETSIHRLGASVVGFSDSSNTSLGKKGETLADTMSVISTYVDAIVMRHPQEGASRLAAQFSGNVPIVNAGDGANQHPTQTLLDLFTIQETQGRLDNINIAMVGDLKYGRTVHSLTQALAKFNGNHFFFIAPDALAMPAYILQMLEEKEIEYSLHESLEEVVPELDILYMTRVQKERLDPSEYANVKAQFILRSSDLTGARDNLKVLHPLPRIDEITTDVDKTPYAYYFQQAGNGIFARQALLALVLNAELAL.

Residues Arg-55 and Thr-56 each coordinate carbamoyl phosphate. Position 85 (Lys-85) interacts with L-aspartate. Positions 106, 135, and 138 each coordinate carbamoyl phosphate. The L-aspartate site is built by Arg-168 and Arg-230. Carbamoyl phosphate-binding residues include Leu-268 and Pro-269.

The protein belongs to the aspartate/ornithine carbamoyltransferase superfamily. ATCase family. Heterododecamer (2C3:3R2) of six catalytic PyrB chains organized as two trimers (C3), and six regulatory PyrI chains organized as three dimers (R2).

The catalysed reaction is carbamoyl phosphate + L-aspartate = N-carbamoyl-L-aspartate + phosphate + H(+). It participates in pyrimidine metabolism; UMP biosynthesis via de novo pathway; (S)-dihydroorotate from bicarbonate: step 2/3. Functionally, catalyzes the condensation of carbamoyl phosphate and aspartate to form carbamoyl aspartate and inorganic phosphate, the committed step in the de novo pyrimidine nucleotide biosynthesis pathway. The protein is Aspartate carbamoyltransferase catalytic subunit of Yersinia pestis.